A 435-amino-acid polypeptide reads, in one-letter code: Zinc metalloproteinase/disintegrin (435 aa).

Positions 1 to 26 are excised as a propeptide; it reads KMCGVTQNWESYESTKKASQLNLTPE. Position 27 is a pyrrolidone carboxylic acid (glutamine 27). A Peptidase M12B domain is found at 33–227; the sequence is RYIKLGIFVD…HNFQCILNAP (195 aa). Asparagine 115 is a glycosylation site (N-linked (GlcNAc...) asparagine). 3 disulfide bridges follow: cysteine 144-cysteine 222, cysteine 184-cysteine 206, and cysteine 186-cysteine 189. A Zn(2+)-binding site is contributed by histidine 169. Glutamate 170 is an active-site residue. Histidine 173 and histidine 179 together coordinate Zn(2+). A propeptide spanning residues 228 to 243 is cleaved from the precursor; it reads LRTDTVSTPVSGNELL. Positions 235–318 constitute a Disintegrin domain; sequence TPVSGNELLE…DCPTDDFHRN (84 aa). Valine 237, asparagine 240, leucine 242, glutamate 244, glutamate 247, and aspartate 250 together coordinate Ca(2+). Cystine bridges form between cysteine 249/cysteine 264, cysteine 251/cysteine 259, cysteine 258/cysteine 281, cysteine 272/cysteine 278, cysteine 277/cysteine 303, and cysteine 290/cysteine 310. Positions 296-298 match the D/ECD-tripeptide motif; the sequence is ECD.

The protein belongs to the venom metalloproteinase (M12B) family. P-III subfamily. P-IIIb sub-subfamily. Monomer. Zn(2+) is required as a cofactor. Post-translationally, the N-terminus of the metalloproteinase is blocked. As to expression, expressed by the venom gland.

It localises to the secreted. With respect to regulation, inhibited by EDTA. Cleaves the alpha chain of fibrinogen (FGA) preferentially and cleaves the beta chain (FGB) either on longer incubation or at high concentrations. Induces apoptosis of endothelial cells (prior to cell detachment). In terms of biological role, disintegrin: inhibits platelet aggregation induced by ADP, thrombin, platelet-activating factor and collagen. Acts by inhibiting fibrinogen interaction with platelet receptors GPIIb/GPIIIa (ITGA2B/ITGB3). This is Zinc metalloproteinase/disintegrin from Craspedocephalus gramineus (Bamboo pit viper).